We begin with the raw amino-acid sequence, 508 residues long: Photosystem II CP47 reaction center protein (508 aa).

The next 6 membrane-spanning stretches (helical) occupy residues 21–36, 101–115, 140–156, 203–218, 237–252, and 457–472; these read AVHIMHTALVSGWAGS, IVFSGLCFLAAIWHW, GIHLFLSGLACFGFGAF, IAAGTLGILAGLFHLS, VLSSSIAAVFFAAFVV, and SFALLFFFGHIWHGAR.

Belongs to the PsbB/PsbC family. PsbB subfamily. In terms of assembly, PSII is composed of 1 copy each of membrane proteins PsbA, PsbB, PsbC, PsbD, PsbE, PsbF, PsbH, PsbI, PsbJ, PsbK, PsbL, PsbM, PsbT, PsbX, PsbY, PsbZ, Psb30/Ycf12, at least 3 peripheral proteins of the oxygen-evolving complex and a large number of cofactors. It forms dimeric complexes. The cofactor is Binds multiple chlorophylls. PSII binds additional chlorophylls, carotenoids and specific lipids..

Its subcellular location is the plastid. The protein resides in the chloroplast thylakoid membrane. Its function is as follows. One of the components of the core complex of photosystem II (PSII). It binds chlorophyll and helps catalyze the primary light-induced photochemical processes of PSII. PSII is a light-driven water:plastoquinone oxidoreductase, using light energy to abstract electrons from H(2)O, generating O(2) and a proton gradient subsequently used for ATP formation. This is Photosystem II CP47 reaction center protein from Nandina domestica (Heavenly bamboo).